A 473-amino-acid polypeptide reads, in one-letter code: Photosystem II CP43 reaction center protein (473 aa).

Positions Met-1–Glu-14 are excised as a propeptide. Thr-15 carries the post-translational modification N-acetylthreonine. Thr-15 is modified (phosphothreonine). The next 5 membrane-spanning stretches (helical) occupy residues Leu-69–Ala-93, Leu-134–Asn-155, Lys-178–Thr-200, Lys-255–Ser-275, and Trp-291–Ala-312. Residue Glu-367 participates in [CaMn4O5] cluster binding. The helical transmembrane segment at Arg-447–Pro-471 threads the bilayer.

It belongs to the PsbB/PsbC family. PsbC subfamily. PSII is composed of 1 copy each of membrane proteins PsbA, PsbB, PsbC, PsbD, PsbE, PsbF, PsbH, PsbI, PsbJ, PsbK, PsbL, PsbM, PsbT, PsbX, PsbY, PsbZ, Psb30/Ycf12, at least 3 peripheral proteins of the oxygen-evolving complex and a large number of cofactors. It forms dimeric complexes. Binds multiple chlorophylls and provides some of the ligands for the Ca-4Mn-5O cluster of the oxygen-evolving complex. It may also provide a ligand for a Cl- that is required for oxygen evolution. PSII binds additional chlorophylls, carotenoids and specific lipids. is required as a cofactor.

The protein resides in the plastid. It is found in the chloroplast thylakoid membrane. In terms of biological role, one of the components of the core complex of photosystem II (PSII). It binds chlorophyll and helps catalyze the primary light-induced photochemical processes of PSII. PSII is a light-driven water:plastoquinone oxidoreductase, using light energy to abstract electrons from H(2)O, generating O(2) and a proton gradient subsequently used for ATP formation. This Cicer arietinum (Chickpea) protein is Photosystem II CP43 reaction center protein.